A 147-amino-acid chain; its full sequence is uncharacterized protein (147 aa).

The tract at residues 30 to 102 (GRCEQVALSS…TPPTRPESIF (73 aa)) is disordered. Over residues 62–71 (RPSTGETFVQ) the composition is skewed to polar residues.

This is an uncharacterized protein from Homo sapiens (Human).